We begin with the raw amino-acid sequence, 702 residues long: Ribosomal RNA large subunit methyltransferase K/L (702 aa).

The THUMP domain maps to 43-154; that stretch reads LIYQSLMWSR…KETASIALDL (112 aa).

This sequence belongs to the methyltransferase superfamily. RlmKL family.

It is found in the cytoplasm. The catalysed reaction is guanosine(2445) in 23S rRNA + S-adenosyl-L-methionine = N(2)-methylguanosine(2445) in 23S rRNA + S-adenosyl-L-homocysteine + H(+). The enzyme catalyses guanosine(2069) in 23S rRNA + S-adenosyl-L-methionine = N(2)-methylguanosine(2069) in 23S rRNA + S-adenosyl-L-homocysteine + H(+). Specifically methylates the guanine in position 2445 (m2G2445) and the guanine in position 2069 (m7G2069) of 23S rRNA. The sequence is that of Ribosomal RNA large subunit methyltransferase K/L from Salmonella arizonae (strain ATCC BAA-731 / CDC346-86 / RSK2980).